The sequence spans 1439 residues: MTLPHSPGSAGEPQASQTVQVHRLEHRQEEEQKEERQHSLQMGSSVQRRTYRSSEEEQQFSSEDYALAAALALTASSELSWEAKLRRQTTTVELEERGQRRVGFGNDLERMELAFLRTQRLLRQRRDWKALRQRTEEKVREAKELIELCSGRGPWFWIPLRSHAVWEHTTVLLTCTVQGSPPFQVTWYKNDIRIDPRLFPAGKYRITNNYGLLTLEIMRCTVEDSATYTVLVKNAYGQASSFAKVLIRNYLGKDAGFDSEIFKRSMFGPSAEFTSVLKPIFAQEKEPFSLTCLFSDDVLEAEQRIQWYRDGRLLRSSTRRQILYADRQASVKVSCAYKEDEGFYTIRVSSPFGPQEQSAYVFIRDAAAEKPGAPGSPLNVRCLNVHRDCLTLTWVPPSDTRGSTITGYSIEMCQGDSEEWMPCLKAPGGTCRCPIQGLVEGQSYQFRVRAISKAGTSLPSKASEAVVTGDYDAVHKSTEIPYDLGSKITISKNDFEDAVTIPSAPTNVHASEIREAYAVLSWEEPRPRGRAPLTYTLEKSVIGSGTWEAISTETPIKSPRFALLDLEKGKSYVFRVRALNQYGMSDPSEPSEPVALKGKPATLPPPAQVQAFRNTQTSVSLAWEPVDGGSELLGYYIYSREAGASEWQTVNNKPIQDTKFTVPGLRTGKEYDFCIRSVSEAGVGESSAATQPVRVKQALATPSAPYDFALLNCGKNEMVIGWKPPKRRGGGKILGYFMDQHDSVESDWHPVNRQPIPSRVCKVTNLHEGHFYEFRARAVNWAGIGELSAPSSLFECKEWTMPEPGPPYDVRVSEVQATSVMLQWEPPLYIGAGPVTGYHVSFQEKGSEEWKPVTPDATSDTHLRVSDLQPGKQYMFRVQAMNSAGLGQPSVPTDPVLLEDKPDAQEIEVGVDDEGQIYLAFEAPEAPDFPEFQWSKDYQGPPDPQRVEVEDEISKSKVILKEPDLQDLGIYSVVVPDADEDTSASHTLTEEELNKLKKLSHEIRNPVIKLISGWNVEILEQGEVRLWLEVEKLSPAAELHLIFNEKEIFSSPNRKINFDREKGLVEVIIQQLSEDDKGSYTAQLQDGKAKNQITLALVDDEFDKLLRKADAKRRDWKRKQGPYFQEPLTWKVTDDCQVLLSCKVTNTKKESRFQWFFQKKEAPHGQYNPPTGDGSLSIEGFSKENQGVYRAVVSDERGEDDTVLDLTGEALDAVLTELGRIGALSATPLKIQGTEEGIRLFSKVKYYNVDYMKTAWFHKDKRLESGDRVRAGTTLDEIWLHILDPKDSDKGKYTLEITAGKEVRQLSADLSGQAFDDALAEHQRLKALAVIEKNRAKVVRGLPDVATIMEDKTLCLTCVISGDPSPEISWLKNDQPISFFDRYHMEVKGTEVTVTIDKVTSEDSGRYGIFVKNKYGSETGQVTISVFKHGEEPKELKKK.

Residues 1–57 (MTLPHSPGSAGEPQASQTVQVHRLEHRQEEEQKEERQHSLQMGSSVQRRTYRSSEEE) are disordered. A compositionally biased stretch (basic and acidic residues) spans 22-38 (HRLEHRQEEEQKEERQH). The span at 39-48 (SLQMGSSVQR) shows a compositional bias: polar residues. Residues 119 to 149 (QRLLRQRRDWKALRQRTEEKVREAKELIELC) adopt a coiled-coil conformation. 2 consecutive Ig-like C2-type domains span residues 154–246 (PWFW…AKVL) and 269–362 (PSAE…AYVF). 5 consecutive Fibronectin type-III domains span residues 376-471 (SPLN…TGDY), 504-599 (APTN…LKGK), 605-698 (PPAQ…VKQA), 704-799 (APYD…CKEW), and 806-901 (PPYD…LEDK). 2 consecutive Ig-like C2-type domains span residues 1122-1207 (PYFQ…LDLT) and 1336-1425 (AKVV…VTIS).

As to quaternary structure, homodimer. In terms of tissue distribution, mainly expressed in slow muscle, extraocular muscle and embryonic/neonatal skeletal muscle (at protein level). Expression in skeletal muscle is fiber type specific, with the highest levels in type IIA fibers (intermediate speed) and lower levels in type I fibers.

It localises to the cytoplasm. The protein resides in the myofibril. The protein localises to the sarcomere. It is found in the m line. In terms of biological role, may link the intermediate filament cytoskeleton to the M-disk of the myofibrils in striated muscle. This Mus musculus (Mouse) protein is Myomesin-3 (Myom3).